A 320-amino-acid polypeptide reads, in one-letter code: MSSCNFTHATFMLIGIPGLEEAHFWFGFPLLSMYAVALFGNCIVVFIVRTERSLHAPMYLFLCMLAAIDLALSTSTMPKILALFWFDSREITFDACLAQMFFIHALSAIESTILLAMAFDRYVAICHPLRHAAVLNNTVTVQIGMVALVRGSLFFFPLPLLIKRLAFCHSNVLSHSYCVHQDVMKLAYTDTLPNVVYGLTAILLVMGVDVMFISLSYFLIIRAVLQLPSKSERAKAFGTCVSHIGVVLAFYVPLIGLSVVHRFGNSLDPIVHVLMGDVYLLLPPVINPIIYGAKTKQIRTRVLAMFKISCDKDIEAGGNT.

At 1 to 24 (MSSCNFTHATFMLIGIPGLEEAHF) the chain is on the extracellular side. Asn-5 is a glycosylation site (N-linked (GlcNAc...) asparagine). The helical transmembrane segment at 25–45 (WFGFPLLSMYAVALFGNCIVV) threads the bilayer. At 46–53 (FIVRTERS) the chain is on the cytoplasmic side. A helical transmembrane segment spans residues 54–74 (LHAPMYLFLCMLAAIDLALST). Over 75 to 98 (STMPKILALFWFDSREITFDACLA) the chain is Extracellular. Cys-96 and Cys-178 are joined by a disulfide. A helical transmembrane segment spans residues 99–119 (QMFFIHALSAIESTILLAMAF). Residues 120-138 (DRYVAICHPLRHAAVLNNT) lie on the Cytoplasmic side of the membrane. The helical transmembrane segment at 139 to 159 (VTVQIGMVALVRGSLFFFPLP) threads the bilayer. Topologically, residues 160–195 (LLIKRLAFCHSNVLSHSYCVHQDVMKLAYTDTLPNV) are extracellular. The helical transmembrane segment at 196 to 216 (VYGLTAILLVMGVDVMFISLS) threads the bilayer. Residues 217–236 (YFLIIRAVLQLPSKSERAKA) lie on the Cytoplasmic side of the membrane. The helical transmembrane segment at 237–257 (FGTCVSHIGVVLAFYVPLIGL) threads the bilayer. At 258–272 (SVVHRFGNSLDPIVH) the chain is on the extracellular side. A helical membrane pass occupies residues 273-293 (VLMGDVYLLLPPVINPIIYGA). Residues 294–320 (KTKQIRTRVLAMFKISCDKDIEAGGNT) are Cytoplasmic-facing.

This sequence belongs to the G-protein coupled receptor 1 family. Expressed in brain and liver. Expressed only in some areas of the brain and in the olfactory epithelium.

The protein resides in the cell membrane. It is found in the early endosome membrane. Its function is as follows. Olfactory receptor. The activity of this receptor is probably mediated by G-proteins which induce elevation of intracellular Ca(2+), cAMP and activation of phosphorylation of the protein kinases PKA and MAPK3/MAPK1. Activation of OR51E2 may affect melanocyte proliferation, differentiation, and melanogenesis and may increase proliferation and migration of primary retinal pigment epithelial (RPE) cells. Activated by the short chain fatty acids (SCFA), acetate and propionate. In response to SCFA, may positively regulate renin secretion and increase blood pressure. May also be activated by steroid hormones and regulate cell proliferation. Activated by L-lactate in glomus cells. The polypeptide is Olfactory receptor 51E2 (Or51e2) (Rattus norvegicus (Rat)).